Here is a 69-residue protein sequence, read N- to C-terminus: MKIEINENFCKGCDICIVVCPRGVFEKSKKLNKKGIYPPIPVNPEKCTKCNLCILQCPDQAISIELSQE.

4Fe-4S ferredoxin-type domains are found at residues 2–30 (KIEINENFCKGCDICIVVCPRGVFEKSKK) and 38–67 (PPIPVNPEKCTKCNLCILQCPDQAISIELS). Residues Cys-10, Cys-13, Cys-16, Cys-20, Cys-47, Cys-50, Cys-53, and Cys-57 each coordinate [4Fe-4S] cluster.

[4Fe-4S] cluster serves as cofactor.

This is an uncharacterized protein from Methanocaldococcus jannaschii (strain ATCC 43067 / DSM 2661 / JAL-1 / JCM 10045 / NBRC 100440) (Methanococcus jannaschii).